Reading from the N-terminus, the 789-residue chain is Protein FLOWERING LOCUS D (789 aa).

The disordered stretch occupies residues 1 to 23; that stretch reads MVSFSAPKKRRRGRSQRSMSSLN. The SWIRM domain maps to 76–177; sequence NKEATTEALL…FGIAQAIKDK (102 aa). FAD-binding positions include Ser195, Glu214, Arg216, Arg222, and 240-243; that span reads GGSV. A Glycyl lysine isopeptide (Lys-Gly) (interchain with G-Cter in SUMO) cross-link involves residue Lys287. Residues Glu595, 604–605, and 607–612 each bind FAD; these read TM and GAFVTG. Residues Lys693 and Lys770 each participate in a glycyl lysine isopeptide (Lys-Gly) (interchain with G-Cter in SUMO) cross-link.

Belongs to the flavin monoamine oxidase family. In terms of assembly, interacts with HDA6. FAD is required as a cofactor. Sumoylated at Lys-287, Lys-693 and Lys-770 by SIZ1. Sumoylation alters its activity and the histone H4 acetylation status of FLC locus, promoting FLC expression.

Functionally, probable histone demethylase that promotes flowering independently of the photoperiod and vernalization pathways by repressing FLOWERING LOCUS C (FLC), a floral repressor that blocks the transition from vegetative to reproductive development. Probably mediates histone H3 'Lys-4' demethylation at FLC locus. Seems to act in partial redundancy with LDL1 and LDL2 to repress FLC expression. Required for histone H4 deacetylation of FLC locus. May be a component of the histone deacetylase complex. Forms a histone deacetylase complex with HDA5, HDA6 and MSI4/FVE that represses FLC gene expression to control flowering time. Required for systemic acquired resistance (SAR) toward pathogenic bacteria (e.g. Pseudomonas syringae pv tomato DC3000 (avrPto)). Together with FLD and MSI4/FVE, contributes to dehydroabietinal-dependent (DA, a diterpenoid tricyclic diterpene) activation of flowering ans SAR. The chain is Protein FLOWERING LOCUS D from Arabidopsis thaliana (Mouse-ear cress).